We begin with the raw amino-acid sequence, 220 residues long: uncharacterized protein (220 aa).

4 consecutive transmembrane segments (helical) span residues 9 to 29 (LWIT…GSTQ), 54 to 74 (YAVH…FLAV), 105 to 125 (VQGI…IHLW), and 177 to 197 (VLAV…VIEM).

The protein resides in the cell membrane. This is an uncharacterized protein from Sinorhizobium fredii (strain NBRC 101917 / NGR234).